Consider the following 281-residue polypeptide: Feruloyl esterase A (281 aa).

Residues 1–21 (MKQFSAKYALILLATAGQALA) form the signal peptide. Cystine bridges form between C50-C279, C112-C115, and C248-C255. A substrate-binding site is contributed by D98. The N-linked (GlcNAc...) asparagine glycan is linked to N100. Y101 lines the substrate pocket. S154 functions as the Nucleophile in the catalytic mechanism. D215 (charge relay system) is an active-site residue. H268 serves as a coordination point for substrate. H268 acts as the Charge relay system in catalysis.

Post-translationally, glycosylated.

Its subcellular location is the secreted. The enzyme catalyses feruloyl-polysaccharide + H2O = ferulate + polysaccharide.. With respect to regulation, inhibited by the specific serine esterase inhibitor diisopropylfluorophosphate. Its function is as follows. Involved in degradation of plant cell walls. Hydrolyzes the feruloyl-arabinose ester bond in arabinoxylans, and the feruloyl-galactose ester bond in pectin. Binds to cellulose. The sequence is that of Feruloyl esterase A (faeA) from Aspergillus niger.